The following is a 345-amino-acid chain: NADH-quinone oxidoreductase subunit H (345 aa).

Residues 1-15 are Lumenal-facing; it reads MADFWATSLGQTLIL. The helical transmembrane segment at 16-35 threads the bilayer; the sequence is LAQGLGIIAFVMIGLLLLVW. Residues 36 to 86 lie on the Cytoplasmic side of the membrane; it reads GDRKIWAAVQMRKGPNVVGAFGLLQSVADAAKYVFKEIVVPAGVDKPVYFL. Residues 87–106 traverse the membrane as a helical segment; it reads APMLSLVLALLAWVVVPFNE. At 107–110 the chain is on the lumenal side; it reads GWVM. A helical membrane pass occupies residues 111-130; sequence ADINVAVLFVFAVSSLEVYG. Residues 131–156 are Cytoplasmic-facing; sequence VIMGGWASNSKYPFLGSLRSAAQMIS. A helical membrane pass occupies residues 157-176; that stretch reads YEVSMGLIIVGVIISTGSMN. Topologically, residues 177 to 191 are lumenal; sequence LSAIVEAQRGDFGLL. A helical transmembrane segment spans residues 192–211; it reads NWYWLPHLPMVALFFISALA. At 212–245 the chain is on the cytoplasmic side; it reads ETNRPPFDLPEAESELVAGFMVEYSSTPYLLFMA. Residues 246–265 form a helical membrane-spanning segment; sequence GEYIAVWLMCALTSVLFFGG. The Lumenal portion of the chain corresponds to 266–276; the sequence is WLSPIPGVPDG. Residues 277–296 form a helical membrane-spanning segment; sequence VLWMVAKMAAVFFVFAMVKA. Residues 297 to 313 are Cytoplasmic-facing; that stretch reads IVPRYRYDQLMRIGWKV. Residues 314–333 form a helical membrane-spanning segment; that stretch reads FLPLSLAWVVVVAFLAKFEV. The Lumenal portion of the chain corresponds to 334-345; that stretch reads LGGFWARWSIGA.

Belongs to the complex I subunit 1 family. In terms of assembly, NDH-1 is composed of 14 different subunits. Subunits NuoA, H, J, K, L, M, N constitute the membrane sector of the complex.

Its subcellular location is the cellular chromatophore membrane. The catalysed reaction is a quinone + NADH + 5 H(+)(in) = a quinol + NAD(+) + 4 H(+)(out). Its function is as follows. NDH-1 shuttles electrons from NADH, via FMN and iron-sulfur (Fe-S) centers, to quinones in the respiratory chain. The immediate electron acceptor for the enzyme in this species is believed to be ubiquinone. Couples the redox reaction to proton translocation (for every two electrons transferred, four hydrogen ions are translocated across the cytoplasmic membrane), and thus conserves the redox energy in a proton gradient. This subunit may bind ubiquinone. This is NADH-quinone oxidoreductase subunit H from Rhodobacter capsulatus (Rhodopseudomonas capsulata).